The chain runs to 334 residues: MLNTLIVGASGYAGAELVTCVNRHPHMNITALTVSAQSNDAGKLISDLHPQLKGIVDLPLQPMSDISEFSPGVDVVFLATAHEVSHDLAPQFLDAGCVVFDLSGAFRVNDATFYEKYYGFTHQYPELLEQAAYGLAEWCGNKLKEANLIAVPGCYPTAAQLALKPLIDADLLDLNQWPVINATSGVSGAGRKAAISNSFCEVSLQPYGVFTHRHQPEIATHLGADVIFTPHLGNFPRGILETITCRLKPGVTQAQVAQALQQAYAHKPLVRLYDKGVPALKNVVGLPFCDIGFAVQGEHLIIVATEDNLLKGAAAQAVQCANIRFGYAETQSLI.

Cysteine 154 is an active-site residue.

Belongs to the NAGSA dehydrogenase family. Type 1 subfamily.

The protein localises to the cytoplasm. It carries out the reaction N-acetyl-L-glutamate 5-semialdehyde + phosphate + NADP(+) = N-acetyl-L-glutamyl 5-phosphate + NADPH + H(+). The protein operates within amino-acid biosynthesis; L-arginine biosynthesis; N(2)-acetyl-L-ornithine from L-glutamate: step 3/4. Its function is as follows. Catalyzes the NADPH-dependent reduction of N-acetyl-5-glutamyl phosphate to yield N-acetyl-L-glutamate 5-semialdehyde. The sequence is that of N-acetyl-gamma-glutamyl-phosphate reductase from Escherichia coli O157:H7.